Consider the following 759-residue polypeptide: 1,4-alpha-glucan branching enzyme GlgB (759 aa).

Catalysis depends on aspartate 431, which acts as the Nucleophile. Glutamate 484 functions as the Proton donor in the catalytic mechanism.

It belongs to the glycosyl hydrolase 13 family. GlgB subfamily. Monomer.

The enzyme catalyses Transfers a segment of a (1-&gt;4)-alpha-D-glucan chain to a primary hydroxy group in a similar glucan chain.. The protein operates within glycan biosynthesis; glycogen biosynthesis. Functionally, catalyzes the formation of the alpha-1,6-glucosidic linkages in glycogen by scission of a 1,4-alpha-linked oligosaccharide from growing alpha-1,4-glucan chains and the subsequent attachment of the oligosaccharide to the alpha-1,6 position. The chain is 1,4-alpha-glucan branching enzyme GlgB from Prochlorococcus marinus (strain MIT 9211).